Consider the following 388-residue polypeptide: Ribonuclease D (388 aa).

Residues 7–173 form the 3'-5' exonuclease domain; the sequence is ITDSKTLAQF…QIFPKMLEEL (167 aa). The HRDC domain maps to 212 to 293; sequence KADVLGRLKA…ASHAPLAKEE (82 aa).

The protein belongs to the RNase D family. The cofactor is a divalent metal cation.

The protein localises to the cytoplasm. The catalysed reaction is Exonucleolytic cleavage that removes extra residues from the 3'-terminus of tRNA to produce 5'-mononucleotides.. In terms of biological role, exonuclease involved in the 3' processing of various precursor tRNAs. Initiates hydrolysis at the 3'-terminus of an RNA molecule and releases 5'-mononucleotides. In Sphingobium indicum (strain DSM 16413 / CCM 7287 / MTCC 6362 / UT26 / NBRC 101211 / UT26S) (Sphingobium japonicum), this protein is Ribonuclease D.